The chain runs to 273 residues: 2,3,4,5-tetrahydropyridine-2,6-dicarboxylate N-succinyltransferase (273 aa).

Arg106 and Asp143 together coordinate substrate.

This sequence belongs to the transferase hexapeptide repeat family. In terms of assembly, homotrimer.

Its subcellular location is the cytoplasm. The catalysed reaction is (S)-2,3,4,5-tetrahydrodipicolinate + succinyl-CoA + H2O = (S)-2-succinylamino-6-oxoheptanedioate + CoA. Its pathway is amino-acid biosynthesis; L-lysine biosynthesis via DAP pathway; LL-2,6-diaminopimelate from (S)-tetrahydrodipicolinate (succinylase route): step 1/3. The sequence is that of 2,3,4,5-tetrahydropyridine-2,6-dicarboxylate N-succinyltransferase from Wolbachia pipientis wMel.